A 103-amino-acid polypeptide reads, in one-letter code: Nucleoid-associated protein Cgl0243/cg0297 (103 aa).

Belongs to the YbaB/EbfC family. In terms of assembly, homodimer.

The protein localises to the cytoplasm. It is found in the nucleoid. Its function is as follows. Binds to DNA and alters its conformation. May be involved in regulation of gene expression, nucleoid organization and DNA protection. In Corynebacterium glutamicum (strain ATCC 13032 / DSM 20300 / JCM 1318 / BCRC 11384 / CCUG 27702 / LMG 3730 / NBRC 12168 / NCIMB 10025 / NRRL B-2784 / 534), this protein is Nucleoid-associated protein Cgl0243/cg0297.